The following is a 239-amino-acid chain: Ribonuclease PH (239 aa).

Phosphate contacts are provided by residues Arg-86 and 124–126 (GTR).

The protein belongs to the RNase PH family. Homohexameric ring arranged as a trimer of dimers.

It carries out the reaction tRNA(n+1) + phosphate = tRNA(n) + a ribonucleoside 5'-diphosphate. Its function is as follows. Phosphorolytic 3'-5' exoribonuclease that plays an important role in tRNA 3'-end maturation. Removes nucleotide residues following the 3'-CCA terminus of tRNAs; can also add nucleotides to the ends of RNA molecules by using nucleoside diphosphates as substrates, but this may not be physiologically important. Probably plays a role in initiation of 16S rRNA degradation (leading to ribosome degradation) during starvation. This chain is Ribonuclease PH, found in Sinorhizobium fredii (strain NBRC 101917 / NGR234).